A 238-amino-acid polypeptide reads, in one-letter code: ATP synthase subunit a (238 aa).

A run of 6 helical transmembrane segments spans residues 18–38 (TTNL…VFAL), 76–96 (FGLY…IGLF), 114–134 (PIVT…SGVA), 150–170 (FKVW…TLGL), 188–208 (GIAF…ALIW), and 211–231 (FSVF…SVYI).

This sequence belongs to the ATPase A chain family. In terms of assembly, F-type ATPases have 2 components, CF(1) - the catalytic core - and CF(0) - the membrane proton channel. CF(1) has five subunits: alpha(3), beta(3), gamma(1), delta(1), epsilon(1). CF(0) has three main subunits: a(1), b(2) and c(9-12). The alpha and beta chains form an alternating ring which encloses part of the gamma chain. CF(1) is attached to CF(0) by a central stalk formed by the gamma and epsilon chains, while a peripheral stalk is formed by the delta and b chains.

The protein localises to the cell membrane. In terms of biological role, key component of the proton channel; it plays a direct role in the translocation of protons across the membrane. The sequence is that of ATP synthase subunit a from Pediococcus pentosaceus (strain ATCC 25745 / CCUG 21536 / LMG 10740 / 183-1w).